Reading from the N-terminus, the 352-residue chain is Nicotinate-nucleotide--dimethylbenzimidazole phosphoribosyltransferase (352 aa).

The active-site Proton acceptor is Glu318.

It belongs to the CobT family.

The catalysed reaction is 5,6-dimethylbenzimidazole + nicotinate beta-D-ribonucleotide = alpha-ribazole 5'-phosphate + nicotinate + H(+). It functions in the pathway nucleoside biosynthesis; alpha-ribazole biosynthesis; alpha-ribazole from 5,6-dimethylbenzimidazole: step 1/2. Functionally, catalyzes the synthesis of alpha-ribazole-5'-phosphate from nicotinate mononucleotide (NAMN) and 5,6-dimethylbenzimidazole (DMB). The chain is Nicotinate-nucleotide--dimethylbenzimidazole phosphoribosyltransferase from Dehalococcoides mccartyi (strain ATCC BAA-2100 / JCM 16839 / KCTC 5957 / BAV1).